The chain runs to 915 residues: Protein SLFN14 (915 aa).

Residues 157–167 (AAQRGRRRLHP) are compositionally biased toward basic residues. The disordered stretch occupies residues 157–176 (AAQRGRRRLHPPRASNSNLQ). Positions 204–389 (ESTHVEFKRF…KVLEFKGALQ (186 aa)) are required for endoribonuclease activity. The interval 390–569 (RHLFPVTQKT…QLGCEFFNLL (180 aa)) is required for ribosome binding.

In terms of assembly, associates with ribosomes in an ATP-independent manner. It depends on Mg(2+) as a cofactor. Requires Mn(2+) as cofactor. Detected in reticulocytes (at protein level).

It localises to the nucleus. Its function is as follows. Shows no ribosome-associated and endoribonuclease activities. Functionally, displays polysome-associated endoribonuclease activity towards mRNAs and rRNAs. May play a role in RNA surveillance pathways by recognizing stalled ribosomes and triggering endonucleolytic cleavage of aberrant mRNAs. Cleaves RNAs in a magnesium-, manganese-dependent and ATP-independent manner. Involved in correct maturation of megakaryocytes and especially important for proplatelet extension. The chain is Protein SLFN14 from Oryctolagus cuniculus (Rabbit).